Here is a 233-residue protein sequence, read N- to C-terminus: 7-cyano-7-deazaguanine synthase (233 aa).

ATP is bound at residue 7–17; sequence CSGGLDSVSLA. Residues Cys-185, Cys-193, Cys-196, and Cys-199 each coordinate Zn(2+).

Belongs to the QueC family. It depends on Zn(2+) as a cofactor.

The enzyme catalyses 7-carboxy-7-deazaguanine + NH4(+) + ATP = 7-cyano-7-deazaguanine + ADP + phosphate + H2O + H(+). It functions in the pathway purine metabolism; 7-cyano-7-deazaguanine biosynthesis. In terms of biological role, catalyzes the ATP-dependent conversion of 7-carboxy-7-deazaguanine (CDG) to 7-cyano-7-deazaguanine (preQ(0)). This is 7-cyano-7-deazaguanine synthase from Ruegeria sp. (strain TM1040) (Silicibacter sp.).